Reading from the N-terminus, the 559-residue chain is Small ribosomal subunit protein bS1 (559 aa).

6 S1 motif domains span residues 21–87 (GAII…LSRE), 105–171 (DEVV…VSRR), 192–260 (GQQV…LGLK), 277–347 (GTRV…LGIK), 364–434 (GDRI…LGIK), and 451–520 (GSIV…LSVK).

It belongs to the bacterial ribosomal protein bS1 family.

Functionally, binds mRNA; thus facilitating recognition of the initiation point. It is needed to translate mRNA with a short Shine-Dalgarno (SD) purine-rich sequence. The chain is Small ribosomal subunit protein bS1 (rpsA) from Pseudomonas aeruginosa (strain ATCC 15692 / DSM 22644 / CIP 104116 / JCM 14847 / LMG 12228 / 1C / PRS 101 / PAO1).